A 172-amino-acid polypeptide reads, in one-letter code: Translation initiation factor IF-3 (172 aa).

The protein belongs to the IF-3 family. In terms of assembly, monomer.

It localises to the cytoplasm. Functionally, IF-3 binds to the 30S ribosomal subunit and shifts the equilibrium between 70S ribosomes and their 50S and 30S subunits in favor of the free subunits, thus enhancing the availability of 30S subunits on which protein synthesis initiation begins. The polypeptide is Translation initiation factor IF-3 (Bartonella henselae (strain ATCC 49882 / DSM 28221 / CCUG 30454 / Houston 1) (Rochalimaea henselae)).